The chain runs to 131 residues: Large-conductance mechanosensitive channel (131 aa).

The next 3 membrane-spanning stretches (helical) occupy residues 8–28 (FALK…GAFG), 30–50 (IVTS…VGGI), and 72–92 (GQFI…FMFI).

It belongs to the MscL family. In terms of assembly, homopentamer.

The protein resides in the cell membrane. Functionally, channel that opens in response to stretch forces in the membrane lipid bilayer. May participate in the regulation of osmotic pressure changes within the cell. In Alkaliphilus oremlandii (strain OhILAs) (Clostridium oremlandii (strain OhILAs)), this protein is Large-conductance mechanosensitive channel.